The following is a 146-amino-acid chain: Large ribosomal subunit protein uL15 (146 aa).

Positions 1–57 (MKLFELQPAPGSKKLPKRKGRGHGTGNGKTAGRGHKGQNARSGGGVRPGFEGGQMPL) are disordered. Over residues 42-52 (SGGGVRPGFEG) the composition is skewed to gly residues.

The protein belongs to the universal ribosomal protein uL15 family. As to quaternary structure, part of the 50S ribosomal subunit.

Binds to the 23S rRNA. In Acetivibrio thermocellus (strain ATCC 27405 / DSM 1237 / JCM 9322 / NBRC 103400 / NCIMB 10682 / NRRL B-4536 / VPI 7372) (Clostridium thermocellum), this protein is Large ribosomal subunit protein uL15.